The sequence spans 338 residues: Heat-inducible transcription repressor HrcA (338 aa).

This sequence belongs to the HrcA family.

Its function is as follows. Negative regulator of class I heat shock genes (grpE-dnaK-dnaJ and groELS operons). Prevents heat-shock induction of these operons. The protein is Heat-inducible transcription repressor HrcA of Nitrosomonas eutropha (strain DSM 101675 / C91 / Nm57).